Reading from the N-terminus, the 83-residue chain is Polcalcin Bra r 2 (83 aa).

EF-hand domains are found at residues 5–40 and 43–75; these read TEKAEHDRIFKKFDANGDGKISASELGDALKNLGSV and DDIKRMMAEIDTDGDGYISYQEFSDFASANRGL. Residues D18, N20, D22, K24, E29, D53, D55, D57, Y59, and E64 each coordinate Ca(2+).

The polypeptide is Polcalcin Bra r 2 (Brassica campestris (Field mustard)).